The following is a 156-amino-acid chain: MNVYNKADSFSLESDSIKDVIHDYICWLSMTDEMRPSIGNVFKAMETFKIDAVRYYDGNIYDLAKDINAMSFDSFIRSLQNISSKKDKLTVYGTMGLLSIVVDINKGCDISNIKFAAGIIILMEYIFDNTDMSHLKVALYRRIQRRYPIDDDEEDR.

Belongs to the orthopoxvirus OPG029 family. As to quaternary structure, interacts with host TANK, TBKBP1 and AZI2; these interactions prevent interferon production. Interacts with host STAT2.

Functionally, prevents establishment of cellular antiviral state by blocking virus-induced phosphorylation and activation of interferon regulatory factors 3/IRF3 and 7/IRF7, transcription factors critical for the induction of interferons alpha and beta. This blockage is produced through the inhibition of host TBK1, by binding host TBK1 adapter proteins TBKBP1 and AZI2, thereby producing a strong inhibition of the phosphorylation and activation of IRF3 and IRF7. Also acts as an inhibitor of the cellular response to type I IFN by interacting with host STAT2. Mechanistically, exerts its inhibitory effect after host ISGF3 complex (composed of STAT1, STAT2 and IRF9) binding to the interferon stimulated response element (ISRE). The polypeptide is IFN signaling evasion protein OPG029 (OPG029) (Variola virus (isolate Human/India/Ind3/1967) (VARV)).